Consider the following 261-residue polypeptide: Phosphatidylglycerol--prolipoprotein diacylglyceryl transferase (261 aa).

4 helical membrane-spanning segments follow: residues Phe-17–Gly-37, Leu-59–Tyr-79, Ile-94–Trp-114, and Thr-121–Gly-141. Position 142 (Arg-142) interacts with a 1,2-diacyl-sn-glycero-3-phospho-(1'-sn-glycerol). 2 consecutive transmembrane segments (helical) span residues Pro-174 to Tyr-194 and Phe-228 to Ile-248.

The protein belongs to the Lgt family.

The protein localises to the cell inner membrane. It carries out the reaction L-cysteinyl-[prolipoprotein] + a 1,2-diacyl-sn-glycero-3-phospho-(1'-sn-glycerol) = an S-1,2-diacyl-sn-glyceryl-L-cysteinyl-[prolipoprotein] + sn-glycerol 1-phosphate + H(+). It participates in protein modification; lipoprotein biosynthesis (diacylglyceryl transfer). Functionally, catalyzes the transfer of the diacylglyceryl group from phosphatidylglycerol to the sulfhydryl group of the N-terminal cysteine of a prolipoprotein, the first step in the formation of mature lipoproteins. The chain is Phosphatidylglycerol--prolipoprotein diacylglyceryl transferase from Polynucleobacter asymbioticus (strain DSM 18221 / CIP 109841 / QLW-P1DMWA-1) (Polynucleobacter necessarius subsp. asymbioticus).